The sequence spans 205 residues: Small ribosomal subunit protein uS4 (205 aa).

The disordered stretch occupies residues I19–L45. Residues S94–V157 form the S4 RNA-binding domain.

It belongs to the universal ribosomal protein uS4 family. Part of the 30S ribosomal subunit. Contacts protein S5. The interaction surface between S4 and S5 is involved in control of translational fidelity.

In terms of biological role, one of the primary rRNA binding proteins, it binds directly to 16S rRNA where it nucleates assembly of the body of the 30S subunit. Its function is as follows. With S5 and S12 plays an important role in translational accuracy. The protein is Small ribosomal subunit protein uS4 of Brucella anthropi (strain ATCC 49188 / DSM 6882 / CCUG 24695 / JCM 21032 / LMG 3331 / NBRC 15819 / NCTC 12168 / Alc 37) (Ochrobactrum anthropi).